The primary structure comprises 553 residues: Chaperonin GroEL 2 (553 aa).

ATP-binding positions include 29–32 (TLGP), 86–90 (DGTTT), glycine 414, and aspartate 495.

It belongs to the chaperonin (HSP60) family. In terms of assembly, forms a cylinder of 14 subunits composed of two heptameric rings stacked back-to-back. Interacts with the co-chaperonin GroES.

Its subcellular location is the cytoplasm. It carries out the reaction ATP + H2O + a folded polypeptide = ADP + phosphate + an unfolded polypeptide.. Functionally, together with its co-chaperonin GroES, plays an essential role in assisting protein folding. The GroEL-GroES system forms a nano-cage that allows encapsulation of the non-native substrate proteins and provides a physical environment optimized to promote and accelerate protein folding. The protein is Chaperonin GroEL 2 of Gloeobacter violaceus (strain ATCC 29082 / PCC 7421).